The following is a 361-amino-acid chain: Fructose-1,6-bisphosphatase class 1 2 (361 aa).

Mg(2+) contacts are provided by glutamate 110, aspartate 134, leucine 136, and aspartate 137. Substrate is bound by residues 137–140, asparagine 231, tyrosine 264, and lysine 294; that span reads DGSS. Glutamate 300 contributes to the Mg(2+) binding site.

It belongs to the FBPase class 1 family. As to quaternary structure, homotetramer. Mg(2+) serves as cofactor.

The protein resides in the cytoplasm. It carries out the reaction beta-D-fructose 1,6-bisphosphate + H2O = beta-D-fructose 6-phosphate + phosphate. Its pathway is carbohydrate biosynthesis; gluconeogenesis. This chain is Fructose-1,6-bisphosphatase class 1 2, found in Salinibacter ruber (strain DSM 13855 / M31).